A 341-amino-acid polypeptide reads, in one-letter code: Aromatic amino acid aminotransferase (341 aa).

An N6-(pyridoxal phosphate)lysine modification is found at lysine 213.

This sequence belongs to the class-II pyridoxal-phosphate-dependent aminotransferase family. In terms of assembly, homodimer. The cofactor is pyridoxal 5'-phosphate.

The enzyme catalyses an aromatic L-alpha-amino acid + 2-oxoglutarate = an aromatic oxo-acid + L-glutamate. In terms of biological role, aminotransferase that catalyzes the conversion of aromatic amino acids and 2-oxoglutarate into corresponding aromatic oxo acids and L-glutamate. May catalyze the transamination reaction in phenylalanine biosynthesis. The polypeptide is Aromatic amino acid aminotransferase (Corynebacterium glutamicum (strain ATCC 13032 / DSM 20300 / JCM 1318 / BCRC 11384 / CCUG 27702 / LMG 3730 / NBRC 12168 / NCIMB 10025 / NRRL B-2784 / 534)).